We begin with the raw amino-acid sequence, 641 residues long: Epsin-2 (641 aa).

The a 1,2-diacyl-sn-glycero-3-phospho-(1D-myo-inositol-4,5-bisphosphate) site is built by R8, K11, R25, N30, R63, and H73. The 133-residue stretch at 12–144 (NIVNNYSEAE…KDEERLKAER (133 aa)) folds into the ENTH domain. Residues R153 and Q156 each carry the phosphoserine modification. Polar residues predominate over residues 163 to 181 (SNQITFGRGSSQPNLSTSH). Disordered regions lie at residues 163 to 214 (SNQI…GAPL) and 255 to 275 (RATSPRVSSELEQARPQTSGE). Omega-N-methylarginine is present on R170. A phosphoserine mark is found at S173, S192, and S195. The span at 259–273 (PRVSSELEQARPQTS) shows a compositional bias: polar residues. UIM domains lie at 275 to 294 (EEELQLQLALAMSREVAEQE) and 300 to 319 (GDDLRLQMALEESRRDTVKI). The tract at residues 340-425 (ALPSSGPAAQ…QPASSAGKRA (86 aa)) is disordered. Tandem repeats lie at residues 352–354 (EPW), 364–366 (NPW), 377–379 (DPW), 391–393 (DPW), 409–411 (DPW), and 427–429 (DAW). The tract at residues 352–639 (EPWGPSASTN…AQATGTTNPF (288 aa)) is 6 X 3 AA repeats of [DE]-P-W. The span at 408-421 (SDPWAASQQPASSA) shows a compositional bias: low complexity. The interval 470–512 (TAESVTSLPSQNNGTTSPDPFESQPLTVASSKPSSARKTPESF) is disordered. Residues 472–506 (ESVTSLPSQNNGTTSPDPFESQPLTVASSKPSSAR) show a composition bias toward polar residues. Position 486 is a phosphoserine (S486). The residue at position 508 (T508) is a Phosphothreonine. Tandem repeats lie at residues 537–539 (NPF) and 552–554 (NPF). The 3 X 3 AA repeats of N-P-F stretch occupies residues 537 to 639 (NPFLAPGAPA…AQATGTTNPF (103 aa)). At S570 the chain carries Phosphoserine. Residues 637 to 639 (NPF) form repeat 3.

The protein belongs to the epsin family. As to quaternary structure, binds EPS15. Interacts with ITSN1. Binds AP-2 and clathrin. Interacts with UBQLN2. In terms of processing, ubiquitinated. Highest expression is found in brain. Detected at lower levels in lung and liver.

The protein resides in the cytoplasm. Its subcellular location is the cytoplasmic vesicle. It localises to the clathrin-coated vesicle. Plays a role in the formation of clathrin-coated invaginations and endocytosis. The chain is Epsin-2 (EPN2) from Homo sapiens (Human).